Here is a 122-residue protein sequence, read N- to C-terminus: Large ribosomal subunit protein uL14 (122 aa).

It belongs to the universal ribosomal protein uL14 family. As to quaternary structure, part of the 50S ribosomal subunit. Forms a cluster with proteins L3 and L19. In the 70S ribosome, L14 and L19 interact and together make contacts with the 16S rRNA in bridges B5 and B8.

In terms of biological role, binds to 23S rRNA. Forms part of two intersubunit bridges in the 70S ribosome. In Nitrosospira multiformis (strain ATCC 25196 / NCIMB 11849 / C 71), this protein is Large ribosomal subunit protein uL14.